Reading from the N-terminus, the 164-residue chain is MTHDKNCPCGSQKSYQDCCQALHLGLDSGAQLATSPEQLMRSRYCAFVLKNFDYIIKTHHAAYLDGLTLEQLQQGPHPEWLGLDVLSANDTTQPDGSKFGTVTFKAWYKMNGEIDAIYERSEFIFEQGRWFYTKGHQMHAKLPGRNDPCVCHSGKKFKQCCMKG.

Belongs to the UPF0225 family.

The chain is UPF0225 protein Shewmr4_2054 from Shewanella sp. (strain MR-4).